The sequence spans 72 residues: Aurein-2.5 (72 aa).

Positions 1–22 (MAFLKKSLFLVLFLGLVSLSIC) are cleaved as a signal peptide. The propeptide occupies 23-49 (EKEKRQNEEDEDENEAANHEEGSEEKR). The disordered stretch occupies residues 27-47 (RQNEEDEDENEAANHEEGSEE). Residues 38–47 (AANHEEGSEE) show a composition bias toward basic and acidic residues. Residue Leu65 is modified to Leucine amide. A propeptide spanning residues 69-72 (NDLE) is cleaved from the precursor.

This sequence belongs to the frog skin active peptide (FSAP) family. Aurein subfamily. May be monomeric or may oligomerize as homodimers or homotrimers in Gram-positive and Gram-negative bacteria mimetic membranes. C-terminal amidation enhances antibacterial activity. This increase may be due to stabilization of the alpha-helical structure at the membrane interface. As to expression, expressed by the skin dorsal glands.

It is found in the secreted. The protein localises to the target cell membrane. Its function is as follows. Amphipathic alpha-helical antimicrobial peptide with moderate to potent activity against Gram-positive bacteria, Gram-negative bacteria and fungi. Also shows a weak activity against biofilm of both Gram-positive and Gram-negative bacteria. Probably acts by disturbing membrane functions with its amphipathic structure. Kills fungi via membranolytic action. Enhanced sterol levels in lipid composition membranes reduce interaction of this peptide with membranes, having a protective effect against the lytic ability of the peptide. Shows anticancer activity. The sequence is that of Aurein-2.5 from Ranoidea aurea (Green and golden bell frog).